A 226-amino-acid polypeptide reads, in one-letter code: Probable proteasome subunit beta type-7 (226 aa).

Belongs to the peptidase T1B family. The 26S proteasome consists of a 20S proteasome core and two 19S regulatory subunits. The 20S proteasome core is composed of 28 subunits that are arranged in four stacked rings, resulting in a barrel-shaped structure. The two end rings are each formed by seven alpha subunits, and the two central rings are each formed by seven beta subunits. The catalytic chamber with the active sites is on the inside of the barrel.

The protein localises to the cytoplasm. The protein resides in the nucleus. Non-catalytic component of the proteasome which degrades poly-ubiquitinated proteins in the cytoplasm and in the nucleus. It is essential for the regulated turnover of proteins and for the removal of misfolded proteins. The proteasome is a multicatalytic proteinase complex that is characterized by its ability to cleave peptides with Arg, Phe, Tyr, Leu, and Glu adjacent to the leaving group at neutral or slightly basic pH. It has an ATP-dependent proteolytic activity. The protein is Probable proteasome subunit beta type-7 (PRE4) of Encephalitozoon cuniculi (strain GB-M1) (Microsporidian parasite).